The sequence spans 757 residues: Chloride anion exchanger (757 aa).

Residues 1–71 (MIEAIGNQYV…SWLPAYKIKE (71 aa)) lie on the Cytoplasmic side of the membrane. The helical transmembrane segment at 72-92 (WLLSDIVSGISTGLVAVLQGL) threads the bilayer. Ala-93 is a topological domain (extracellular). The chain crosses the membrane as a helical span at residues 94 to 114 (FALLVNIPPAYGLYAAFFPVI). The Cytoplasmic segment spans residues 115–124 (TYFFLGTSRH). A helical membrane pass occupies residues 125-145 (ISVGPFPVLSMMVGVVVTRVA). At 146-176 (SGSDTSPALSSSSAENDSMIEEKVMVAASVT) the chain is on the extracellular side. An N-linked (GlcNAc...) asparagine glycan is attached at Asn-161. The chain crosses the membrane as a helical span at residues 177–197 (VLSGIIQLLLGVLQIGFVVIY). Topologically, residues 198-201 (LSES) are cytoplasmic. The chain crosses the membrane as a helical span at residues 202–222 (LISGFTTAAAIHVLVSQLKFM). At 223–250 (LQLTVPAHSDPFSIFKVLESVFSQIQKT) the chain is on the extracellular side. A helical transmembrane segment spans residues 251–271 (NIADLVTSVIILVVVFVVKEI). Residues 272 to 278 (NQRYRSK) are Cytoplasmic-facing. The chain crosses the membrane as a helical span at residues 279 to 299 (LPVPIPIELIMTVIATGISYG). Residues 300-335 (CNFEQRFGVAVVGNMSLGFQPPITPSVEVFQDTIGD) are Extracellular-facing. The helical transmembrane segment at 336–356 (CFGIAIVGFAVAFSVASVYSL) threads the bilayer. The Cytoplasmic segment spans residues 357-367 (KYDYPIDGNQE). The helical transmembrane segment at 368 to 388 (LIALGVSNIFTGAFKGFAGST) threads the bilayer. Topologically, residues 389–404 (ALSRSGVQESTGGKTQ) are extracellular. Residues 405–425 (VAGLLSAVIVLIVIVAIGFLL) traverse the membrane as a helical segment. Topologically, residues 426–462 (QPLQKSVLAALALGNLKGMLMQFAEIGRLWKKDKYDC) are cytoplasmic. The chain crosses the membrane as a helical span at residues 463-483 (LIWIMTFIFAIVLGLGLGLAA). The Extracellular portion of the chain corresponds to 484 to 757 (SVAFQLLTIV…ECQVPVETKF (274 aa)). The region spanning 518–713 (NYADVYEPEG…LTIHDAILHI (196 aa)) is the STAS domain. A PDZ-binding motif is present at residues 754–757 (ETKF).

Belongs to the SLC26A/SulP transporter (TC 2.A.53) family. Interacts with PDZK1, CFTR, SLC26A6 and NHERF1. Interacts (via PDZ-binding motif) with NHERF4 (via the third PDZ domain); interaction leads to decreased expression of SLC26A3 on the cell membrane resulting in its reduced exchanger activity. Post-translationally, N-glycosylation is required for efficient cell surface expression, and protection from proteolytic degradation.

The protein resides in the apical cell membrane. It is found in the membrane. The protein localises to the cell membrane. The enzyme catalyses hydrogencarbonate(in) + 2 chloride(out) = hydrogencarbonate(out) + 2 chloride(in). Mediates chloride-bicarbonate exchange with a chloride bicarbonate stoichiometry of 2:1 in the intestinal epithelia. Plays a role in the chloride and bicarbonate homeostasis during sperm epididymal maturation and capacitation. In Rattus norvegicus (Rat), this protein is Chloride anion exchanger (Slc26a3).